A 454-amino-acid chain; its full sequence is tRNA(Ile)-lysidine synthase (454 aa).

31–36 (SGGADS) lines the ATP pocket.

The protein belongs to the tRNA(Ile)-lysidine synthase family.

It is found in the cytoplasm. The catalysed reaction is cytidine(34) in tRNA(Ile2) + L-lysine + ATP = lysidine(34) in tRNA(Ile2) + AMP + diphosphate + H(+). In terms of biological role, ligates lysine onto the cytidine present at position 34 of the AUA codon-specific tRNA(Ile) that contains the anticodon CAU, in an ATP-dependent manner. Cytidine is converted to lysidine, thus changing the amino acid specificity of the tRNA from methionine to isoleucine. The chain is tRNA(Ile)-lysidine synthase from Porphyromonas gingivalis (strain ATCC 33277 / DSM 20709 / CIP 103683 / JCM 12257 / NCTC 11834 / 2561).